The sequence spans 519 residues: Halolysin (519 aa).

The tat-type signal signal peptide spans 1-27 (MAGTPNFDRRSFLRLAAAAGLTGMAGV). Residues 28-116 (TSATPGRSPG…AEKNATHEAL (89 aa)) constitute a propeptide that is removed on maturation. The 274-residue stretch at 127–400 (QYAPQQVNAD…SGRVDAANAV (274 aa)) folds into the Peptidase S8 domain. Active-site charge relay system residues include D154, H193, and S347. Positions 386 to 425 (STKQGSGRVDAANAVTTDPGDGGGGGGGGSKETTYDGTLS) are disordered. A compositionally biased stretch (gly residues) spans 405-415 (GDGGGGGGGGS).

This sequence belongs to the peptidase S8 family. Post-translationally, predicted to be exported by the Tat system. The position of the signal peptide cleavage has not been experimentally proven.

It localises to the secreted. Functionally, probable secreted halophilic serine protease showing proteolytic activity toward the protease general substrate azocasein. The polypeptide is Halolysin (hly) (Haloferax mediterranei (strain ATCC 33500 / DSM 1411 / JCM 8866 / NBRC 14739 / NCIMB 2177 / R-4) (Halobacterium mediterranei)).